We begin with the raw amino-acid sequence, 746 residues long: NAD(P)H-quinone oxidoreductase subunit 5, chloroplastic (746 aa).

16 helical membrane-spanning segments follow: residues 9-29, 40-60, 89-109, 125-145, 147-167, 185-205, 219-239, 258-278, 280-300, 327-347, 354-374, 396-416, 425-445, 546-566, 607-627, and 723-743; these read WMIP…LLLF, WAFL…DLSI, IDPL…LVLI, FAYM…SNLI, VYIF…FWFT, GDFG…SFEF, NQVH…GPVA, TPIS…FLVA, LLPL…IGII, LGYM…FHLI, ALLF…VGYS, TTFL…CFWS, WLYS…TAFY, ILFP…IGIP, FSVS…KPAY, and LLLY…LNLL.

The protein belongs to the complex I subunit 5 family. NDH is composed of at least 16 different subunits, 5 of which are encoded in the nucleus.

It localises to the plastid. It is found in the chloroplast thylakoid membrane. It catalyses the reaction a plastoquinone + NADH + (n+1) H(+)(in) = a plastoquinol + NAD(+) + n H(+)(out). The catalysed reaction is a plastoquinone + NADPH + (n+1) H(+)(in) = a plastoquinol + NADP(+) + n H(+)(out). In terms of biological role, NDH shuttles electrons from NAD(P)H:plastoquinone, via FMN and iron-sulfur (Fe-S) centers, to quinones in the photosynthetic chain and possibly in a chloroplast respiratory chain. The immediate electron acceptor for the enzyme in this species is believed to be plastoquinone. Couples the redox reaction to proton translocation, and thus conserves the redox energy in a proton gradient. The polypeptide is NAD(P)H-quinone oxidoreductase subunit 5, chloroplastic (ndhF) (Carica papaya (Papaya)).